The chain runs to 33 residues: DCLGWFKSCDPKNDKCCKNYTCSRRDRWCKYDL.

Cystine bridges form between C2-C17, C9-C22, and C16-C29. Leucine amide is present on L33.

Belongs to the neurotoxin 10 (Hwtx-1) family. 04 (CcoTx1) subfamily. As to expression, expressed by the venom gland.

The protein localises to the secreted. Its function is as follows. Inhibits many voltage-gated sodium channels and one voltage-gated calcium channel (Cav2.2/CACNA1B (IC(50)=400 nM), Nav1.2/SCN2A (IC(50)=3-70 nM), Nav1.1/SCN1A (IC(50)=523-1060 nM), Nav1.7/SCN9A (IC(50)=129.1-5120 nM), Nav1.4/SCN4A (IC(50)=263-888 nM or &gt;10 uM) and Nav1.5/SCN5A (IC(50)=188-323 nM or &gt;10 uM)). It acts by shifting the voltage dependence of channel activation to more depolarized potentials and by blocking the inward component of the sodium current. It shows moderate affinity for lipid bilayers. On Nav1.7/SCN9A, it has been shown to interact with the S3-S4 loop of domain DII (site 4). Is significantly more potent against Nav1.2/SCN2A than the other Nav channel subtypes. In vivo, this toxin causes general ataxia, lack of response to stimuli, and semiparalysis. After a few minutes, the mice are unable to stand, and breathing is reduced in rhythm and intensity. Symptoms gradually increase with progressive slowing of breathing and flaccid paralysis, death occurred within 10 to 20 minutes post injection. Animals remain totally flaccid, and no symptoms of excitatory neurotoxicity are observed. The protein is Beta-theraphotoxin-Cm1a of Ceratogyrus marshalli (Straighthorned baboon tarantula).